A 192-amino-acid polypeptide reads, in one-letter code: MDSQNKNSVDAMDGIESRGMKERGGRTNSFLVLRVLAFVLTSTAAIVHGVNNQTETVPIQLTSSMPPLYVPVVAKWHYLSAFVFFVVSNAIACSYAAISVMLSFCGKKSMVPIILTLDLLMVALLFSSNGAATAIGVMGYKGNSHVKWNKVCNVFGKFCNQVAASVVLSLIGSIVFVLLVMLTAFRLHNKSK.

The segment at 1–22 is disordered; it reads MDSQNKNSVDAMDGIESRGMKE. Over 1 to 29 the chain is Cytoplasmic; the sequence is MDSQNKNSVDAMDGIESRGMKERGGRTNS. The helical transmembrane segment at 30–50 threads the bilayer; sequence FLVLRVLAFVLTSTAAIVHGV. Residues 51-81 are Extracellular-facing; sequence NNQTETVPIQLTSSMPPLYVPVVAKWHYLSA. Asn52 is a glycosylation site (N-linked (GlcNAc...) asparagine). The helical transmembrane segment at 82 to 102 threads the bilayer; that stretch reads FVFFVVSNAIACSYAAISVML. Over 103-118 the chain is Cytoplasmic; sequence SFCGKKSMVPIILTLD. The chain crosses the membrane as a helical span at residues 119–139; sequence LLMVALLFSSNGAATAIGVMG. The Extracellular portion of the chain corresponds to 140–161; the sequence is YKGNSHVKWNKVCNVFGKFCNQ. Residues 162–182 traverse the membrane as a helical segment; the sequence is VAASVVLSLIGSIVFVLLVML. Topologically, residues 183–192 are cytoplasmic; the sequence is TAFRLHNKSK.

It belongs to the Casparian strip membrane proteins (CASP) family. As to quaternary structure, homodimer and heterodimers.

The protein resides in the cell membrane. The polypeptide is CASP-like protein 1E1 (Ricinus communis (Castor bean)).